Consider the following 437-residue polypeptide: 3-phosphoshikimate 1-carboxyvinyltransferase (437 aa).

Residues Lys22, Ser23, and Arg27 each coordinate 3-phosphoshikimate. Lys22 provides a ligand contact to phosphoenolpyruvate. Phosphoenolpyruvate contacts are provided by Gly94 and Arg122. The 3-phosphoshikimate site is built by Ser167, Gln169, Asp314, and Lys341. Residue Gln169 participates in phosphoenolpyruvate binding. The active-site Proton acceptor is the Asp314. Phosphoenolpyruvate contacts are provided by Arg345 and Arg389.

Belongs to the EPSP synthase family. As to quaternary structure, monomer.

The protein localises to the cytoplasm. The catalysed reaction is 3-phosphoshikimate + phosphoenolpyruvate = 5-O-(1-carboxyvinyl)-3-phosphoshikimate + phosphate. It functions in the pathway metabolic intermediate biosynthesis; chorismate biosynthesis; chorismate from D-erythrose 4-phosphate and phosphoenolpyruvate: step 6/7. Its function is as follows. Catalyzes the transfer of the enolpyruvyl moiety of phosphoenolpyruvate (PEP) to the 5-hydroxyl of shikimate-3-phosphate (S3P) to produce enolpyruvyl shikimate-3-phosphate and inorganic phosphate. This is 3-phosphoshikimate 1-carboxyvinyltransferase from Oenococcus oeni (strain ATCC BAA-331 / PSU-1).